A 1922-amino-acid polypeptide reads, in one-letter code: Endoribonuclease Dicer (1922 aa).

Residues 51–227 form the Helicase ATP-binding domain; it reads LLEAALDHNT…ELEEKIQKLE (177 aa). 64–71 is an ATP binding site; the sequence is LNTGSGKT. The DECH box signature appears at 175–178; sequence DECH. Positions 256-595 are required for interaction with PRKRA and TARBP2; the sequence is DCGPFTDRSG…LRNKCSKSVD (340 aa). A disordered region spans residues 409-433; that stretch reads YVSWSDSEDDDEDEEIEEKEKPETN. Phosphoserine occurs at positions 413 and 415. A compositionally biased stretch (acidic residues) spans 414–425; the sequence is DSEDDDEDEEIE. The Helicase C-terminal domain maps to 433 to 602; that stretch reads NFPSPFTNIL…SVDTGETDID (170 aa). One can recognise a Dicer dsRNA-binding fold domain in the interval 630 to 722; that stretch reads AIGHINRYCA…MPVGKETVKY (93 aa). The PAZ domain maps to 895–1042; that stretch reads KFMEDIEKSE…LVPELCAIHP (148 aa). 2 positions are modified to phosphoserine: Ser1016 and Ser1160. Positions 1276 to 1403 constitute an RNase III 1 domain; sequence DSEQSPSIGY…TDKWEKDEMT (128 aa). Residues Glu1316, Asp1395, and Glu1398 each contribute to the Mg(2+) site. 3 positions are modified to phosphoserine: Ser1460, Ser1468, and Ser1470. The region spanning 1666–1824 is the RNase III 2 domain; it reads FENFEKKINY…LAGAIYMDSG (159 aa). The Mg(2+) site is built by Glu1705, Asp1810, and Glu1813. A DRBM domain is found at 1849-1914; that stretch reads VPRSPVRELL…ARRALRSLKA (66 aa). The residue at position 1868 (Ser1868) is a Phosphoserine.

It belongs to the helicase family. Dicer subfamily. In terms of assembly, component of the RISC loading complex (RLC), or micro-RNA (miRNA) loading complex (miRLC), which is composed of DICER1, AGO2 and TARBP2; DICER1 and TARBP2 are required to process precursor miRNAs (pre-miRNAs) to mature miRNAs and then load them onto AGO2. Note that the trimeric RLC/miRLC is also referred to as RISC. Interacts with DHX9, AGO1, PIWIL1 and PRKRA. Associates with the 60S ribosome. Interacts with BCDIN3D. Interacts with AGO2, TARBP2, EIF6, MOV10 and RPL7A (60S ribosome subunit); they form a large RNA-induced silencing complex (RISC). Interacts (via Dicer dsRNA-binding fold domain) with ALOX5 (via PLAT domain); this interaction enhances arachidonate 5-lipoxygenase activity and modifies the miRNA precursor processing activity of DICER1. (Microbial infection) Interacts with ebolavirus transcriptional activator VP30; this interaction prevents TARBP2/TRBP binding to DICER1 and thus allows the virus to counteract host RNA silencing. As to quaternary structure, (Microbial infection) Interacts with ebolavirus transcriptional activator VP35; this interaction prevents TARBP2/TRBP binding to DICER1 and thus allows the virus to counteract host RNA silencing. Mg(2+) is required as a cofactor. The cofactor is Mn(2+).

The protein localises to the cytoplasm. It is found in the perinuclear region. The catalysed reaction is Endonucleolytic cleavage to 5'-phosphomonoester.. Double-stranded RNA (dsRNA) endoribonuclease playing a central role in short dsRNA-mediated post-transcriptional gene silencing. Cleaves naturally occurring long dsRNAs and short hairpin pre-microRNAs (miRNA) into fragments of twenty-one to twenty-three nucleotides with 3' overhang of two nucleotides, producing respectively short interfering RNAs (siRNA) and mature microRNAs. SiRNAs and miRNAs serve as guide to direct the RNA-induced silencing complex (RISC) to complementary RNAs to degrade them or prevent their translation. Gene silencing mediated by siRNAs, also called RNA interference, controls the elimination of transcripts from mobile and repetitive DNA elements of the genome but also the degradation of exogenous RNA of viral origin for instance. The miRNA pathway on the other side is a mean to specifically regulate the expression of target genes. The chain is Endoribonuclease Dicer (DICER1) from Homo sapiens (Human).